Consider the following 340-residue polypeptide: Guanine nucleotide-binding protein G(I)/G(S)/G(T) subunit beta-3 (340 aa).

WD repeat units lie at residues Gly53–Asp83, Leu95–Ser125, Ala141–Asp170, Gly182–Asp212, Gly224–Asp254, Ser268–Asp298, and Gly310–Asn340.

It belongs to the WD repeat G protein beta family. G proteins are composed of 3 units, alpha, beta and gamma. Interacts with RASD2. In terms of tissue distribution, expressed at a high level in the heart and at a much lower level in the brain.

In terms of biological role, guanine nucleotide-binding proteins (G proteins) are involved as a modulator or transducer in various transmembrane signaling systems. The beta and gamma chains are required for the GTPase activity, for replacement of GDP by GTP, and for G protein-effector interaction. The polypeptide is Guanine nucleotide-binding protein G(I)/G(S)/G(T) subunit beta-3 (Gnb3) (Rattus norvegicus (Rat)).